The following is a 126-amino-acid chain: Glycine cleavage system H protein (126 aa).

The Lipoyl-binding domain occupies Thr-22 to Glu-104. Lys-63 carries the post-translational modification N6-lipoyllysine.

The protein belongs to the GcvH family. As to quaternary structure, the glycine cleavage system is composed of four proteins: P, T, L and H. The cofactor is (R)-lipoate.

In terms of biological role, the glycine cleavage system catalyzes the degradation of glycine. The H protein shuttles the methylamine group of glycine from the P protein to the T protein. Its function is as follows. Is also involved in protein lipoylation via its role as an octanoyl/lipoyl carrier protein intermediate. The polypeptide is Glycine cleavage system H protein (Staphylococcus saprophyticus subsp. saprophyticus (strain ATCC 15305 / DSM 20229 / NCIMB 8711 / NCTC 7292 / S-41)).